A 138-amino-acid polypeptide reads, in one-letter code: Nucleoside diphosphate kinase (138 aa).

ATP contacts are provided by Lys9, Phe57, Arg85, Thr91, Arg102, and Asn112. The active-site Pros-phosphohistidine intermediate is His115.

It belongs to the NDK family. Homotetramer. Mg(2+) serves as cofactor.

Its subcellular location is the cytoplasm. It catalyses the reaction a 2'-deoxyribonucleoside 5'-diphosphate + ATP = a 2'-deoxyribonucleoside 5'-triphosphate + ADP. The enzyme catalyses a ribonucleoside 5'-diphosphate + ATP = a ribonucleoside 5'-triphosphate + ADP. Its function is as follows. Major role in the synthesis of nucleoside triphosphates other than ATP. The ATP gamma phosphate is transferred to the NDP beta phosphate via a ping-pong mechanism, using a phosphorylated active-site intermediate. The polypeptide is Nucleoside diphosphate kinase (Lawsonia intracellularis (strain PHE/MN1-00)).